The following is a 35-amino-acid chain: uncharacterized protein (35 aa).

An N-terminal signal peptide occupies residues 1–25 (MTERKLLQLLRRPFISLSLFTALRA).

This is an uncharacterized protein from Saccharomyces cerevisiae (strain ATCC 204508 / S288c) (Baker's yeast).